Consider the following 106-residue polypeptide: Transcription and mRNA export factor SUS1 (106 aa).

It belongs to the ENY2 family. In terms of assembly, component of the nuclear pore complex (NPC)-associated TREX-2 complex (transcription and export complex 2), composed of at least SUS1, SAC3, THP1, SEM1, and CDC31. TREX-2 contains 2 SUS1 chains. The TREX-2 complex interacts with the nucleoporin NUP1. Component of the 1.8 MDa SAGA transcription coactivator-HAT complex. SAGA is built of 5 distinct domains with specialized functions. Within the SAGA complex, SUS1, SGF11, SGF73 and UBP8 form an additional subcomplex of SAGA called the DUB module (deubiquitination module). Interacts directly with THP1, SAC3, SGF11, and with the RNA polymerase II.

It localises to the nucleus. Its subcellular location is the nucleoplasm. The protein resides in the cytoplasm. It is found in the P-body. Its function is as follows. Involved in mRNA export coupled transcription activation by association with both the TREX-2 and the SAGA complexes. At the promoters, SAGA is required for recruitment of the basal transcription machinery. It influences RNA polymerase II transcriptional activity through different activities such as TBP interaction and promoter selectivity, interaction with transcription activators, and chromatin modification through histone acetylation and deubiquitination. Within the SAGA complex, participates in a subcomplex required for deubiquitination of H2B and for the maintenance of steady-state H3 methylation levels. The TREX-2 complex functions in docking export-competent ribonucleoprotein particles (mRNPs) to the nuclear entrance of the nuclear pore complex (nuclear basket). TREX-2 participates in mRNA export and accurate chromatin positioning in the nucleus by tethering genes to the nuclear periphery. May also be involved in cytoplasmic mRNA decay by interaction with components of P-bodies. The polypeptide is Transcription and mRNA export factor SUS1 (Mycosarcoma maydis (Corn smut fungus)).